A 331-amino-acid polypeptide reads, in one-letter code: Phenylalanine--tRNA ligase alpha subunit (331 aa).

E258 contributes to the Mg(2+) binding site.

The protein belongs to the class-II aminoacyl-tRNA synthetase family. Phe-tRNA synthetase alpha subunit type 1 subfamily. As to quaternary structure, tetramer of two alpha and two beta subunits. Mg(2+) is required as a cofactor.

It localises to the cytoplasm. The catalysed reaction is tRNA(Phe) + L-phenylalanine + ATP = L-phenylalanyl-tRNA(Phe) + AMP + diphosphate + H(+). This is Phenylalanine--tRNA ligase alpha subunit (pheS) from Synechocystis sp. (strain ATCC 27184 / PCC 6803 / Kazusa).